The chain runs to 284 residues: Formyltetrahydrofolate deformylase (284 aa).

Residues 7–90 (TLLVSCPDQP…QIHFSDQLPR (84 aa)) enclose the ACT domain. The active site involves Asp228.

The protein belongs to the PurU family.

The enzyme catalyses (6R)-10-formyltetrahydrofolate + H2O = (6S)-5,6,7,8-tetrahydrofolate + formate + H(+). It participates in purine metabolism; IMP biosynthesis via de novo pathway; formate from 10-formyl-5,6,7,8-tetrahydrofolate: step 1/1. Catalyzes the hydrolysis of 10-formyltetrahydrofolate (formyl-FH4) to formate and tetrahydrofolate (FH4). The sequence is that of Formyltetrahydrofolate deformylase from Synechocystis sp. (strain ATCC 27184 / PCC 6803 / Kazusa).